Consider the following 435-residue polypeptide: Glutamate-1-semialdehyde 2,1-aminomutase (435 aa).

Lys-266 is modified (N6-(pyridoxal phosphate)lysine).

This sequence belongs to the class-III pyridoxal-phosphate-dependent aminotransferase family. HemL subfamily. In terms of assembly, homodimer. It depends on pyridoxal 5'-phosphate as a cofactor.

It localises to the cytoplasm. The catalysed reaction is (S)-4-amino-5-oxopentanoate = 5-aminolevulinate. It functions in the pathway porphyrin-containing compound metabolism; protoporphyrin-IX biosynthesis; 5-aminolevulinate from L-glutamyl-tRNA(Glu): step 2/2. The polypeptide is Glutamate-1-semialdehyde 2,1-aminomutase (Coxiella burnetii (strain CbuK_Q154) (Coxiella burnetii (strain Q154))).